A 250-amino-acid chain; its full sequence is 5'-nucleotidase SurE (250 aa).

A divalent metal cation contacts are provided by D8, D9, S40, and N94.

The protein belongs to the SurE nucleotidase family. A divalent metal cation serves as cofactor.

It is found in the cytoplasm. It carries out the reaction a ribonucleoside 5'-phosphate + H2O = a ribonucleoside + phosphate. Functionally, nucleotidase that shows phosphatase activity on nucleoside 5'-monophosphates. The chain is 5'-nucleotidase SurE from Wolbachia pipientis wMel.